Here is a 37-residue protein sequence, read N- to C-terminus: Cytochrome b6-f complex subunit 7 (37 aa).

Residues 5–25 (IFGTAFLFIVLVPVGLALGAF) form a helical membrane-spanning segment.

The protein belongs to the PetM family. In terms of assembly, the 4 large subunits of the cytochrome b6-f complex are cytochrome b6, subunit IV (17 kDa polypeptide, PetD), cytochrome f and the Rieske protein, while the 4 small subunits are PetG, PetL, PetM and PetN. The complex functions as a dimer.

It localises to the cellular thylakoid membrane. Its function is as follows. Component of the cytochrome b6-f complex, which mediates electron transfer between photosystem II (PSII) and photosystem I (PSI), cyclic electron flow around PSI, and state transitions. The sequence is that of Cytochrome b6-f complex subunit 7 from Synechococcus elongatus (strain ATCC 33912 / PCC 7942 / FACHB-805) (Anacystis nidulans R2).